The following is a 690-amino-acid chain: Methionine--tRNA ligase (690 aa).

The 'HIGH' region signature appears at 20–30 (PYANGSIHLGH). Zn(2+) contacts are provided by cysteine 151, cysteine 154, cysteine 164, and cysteine 167. The 'KMSKS' region signature appears at 337-341 (KMSKS). Lysine 340 lines the ATP pocket. The tRNA-binding domain maps to 589 to 690 (DFAKVDLRIA…EGAQPGMRVM (102 aa)).

It belongs to the class-I aminoacyl-tRNA synthetase family. MetG type 1 subfamily. As to quaternary structure, homodimer. Requires Zn(2+) as cofactor.

It localises to the cytoplasm. It catalyses the reaction tRNA(Met) + L-methionine + ATP = L-methionyl-tRNA(Met) + AMP + diphosphate. Is required not only for elongation of protein synthesis but also for the initiation of all mRNA translation through initiator tRNA(fMet) aminoacylation. The chain is Methionine--tRNA ligase from Vibrio vulnificus (strain CMCP6).